A 108-amino-acid chain; its full sequence is MNQSEMCPRFEKAVDILSKRWVALIVFQLLNGSQRFSEIEAALPNLSGRVLSERLKELELEGVVKRDVIPETPVRIEYSLTDKGKALAPILGEISKWATEWIDPSFLD.

Positions Cys-7–Phe-106 constitute an HTH hxlR-type domain.

This is an uncharacterized protein from Bacillus subtilis (strain 168).